Here is a 100-residue protein sequence, read N- to C-terminus: Urease subunit gamma (100 aa).

Belongs to the urease gamma subunit family. In terms of assembly, heterotrimer of UreA (gamma), UreB (beta) and UreC (alpha) subunits. Three heterotrimers associate to form the active enzyme.

The protein localises to the cytoplasm. The catalysed reaction is urea + 2 H2O + H(+) = hydrogencarbonate + 2 NH4(+). Its pathway is nitrogen metabolism; urea degradation; CO(2) and NH(3) from urea (urease route): step 1/1. The sequence is that of Urease subunit gamma from Synechococcus sp. (strain WH7805).